Consider the following 96-residue polypeptide: Small ribosomal subunit protein bS20 (96 aa).

The protein belongs to the bacterial ribosomal protein bS20 family.

Binds directly to 16S ribosomal RNA. The protein is Small ribosomal subunit protein bS20 of Thermotoga petrophila (strain ATCC BAA-488 / DSM 13995 / JCM 10881 / RKU-1).